Here is a 458-residue protein sequence, read N- to C-terminus: MGKEKTHVNVVVIGHVDSGKSTTTGHLIYKCGGIDKRTIEKFEKEAAELGKGSFKYAWVLDKLKAERERGITIDIALWKFETPKYNVTVIDAPGHRDFIKNMITGTSQADCAILIIAGGTGEFEAGISKDGQTREHALLAFTLGFRQLIVAINKMDTTKWSQDRYNEIVKEVSGFIKKIGFNPKSVPFVPISGWHGDNMLDESTNMPWFKGWNKETKAGSKTGKTLLEAIDAIEPPVRPSDKPLRLPLQDVYKIGGIGTVPVGRVETGTIKAGMVVNFAPAAVTTEVKSVEMHHETLTEGLPGDNVGFNVKNVSVKDIRRGNVCSDSKNDPAKESASFTAQVIILNHPGQISAGYAPVLDCHTAHIACKFSELIEKIDRRSGKKMEDSPKFVKSGDSAIVKMVPSKPMCVEAYTDYPPLGRFAVRDMRQTVAVGVIKAVEKVDKAGKVTKAAAKASKK.

A N,N,N-trimethylglycine modification is found at glycine 2. Position 3 is an N6,N6-dimethyllysine; alternate (lysine 3). Lysine 3 is modified (N6-methyllysine; alternate). Positions lysine 5–serine 240 constitute a tr-type G domain. Positions glycine 14–serine 21 are G1. Glycine 14–serine 21 is a GTP binding site. N6-methyllysine is present on lysine 30. The G2 stretch occupies residues glycine 70–aspartate 74. The residue at position 79 (lysine 79) is an N6,N6,N6-trimethyllysine. A G3 region spans residues aspartate 91–glycine 94. GTP is bound by residues aspartate 91 to histidine 95 and asparagine 153 to aspartate 156. The segment at asparagine 153–aspartate 156 is G4. The tract at residues serine 192 to tryptophan 194 is G5. Lysine 316 carries the post-translational modification N6,N6-dimethyllysine; alternate. Lysine 316 is modified (N6-methyllysine; alternate). The residue at position 390 (lysine 390) is an N6-methyllysine.

The protein belongs to the TRAFAC class translation factor GTPase superfamily. Classic translation factor GTPase family. EF-Tu/EF-1A subfamily.

The protein localises to the cytoplasm. Its function is as follows. This protein promotes the GTP-dependent binding of aminoacyl-tRNA to the A-site of ribosomes during protein biosynthesis. The chain is Elongation factor 1-alpha (TEF-2) from Mucor circinelloides f. lusitanicus (Mucor racemosus var. lusitanicus).